The following is a 508-amino-acid chain: Pyruvate kinase, cytosolic isozyme (508 aa).

Substrate is bound at residue R48. K(+) is bound by residues N50, S52, D82, and T83. Residue 50–53 (NFSH) coordinates ATP. ATP-binding residues include R89 and K174. Mg(2+) is bound at residue E240. G263, D264, and T296 together coordinate substrate. A Mg(2+)-binding site is contributed by D264.

The protein belongs to the pyruvate kinase family. In terms of assembly, homotetramer. It depends on Mg(2+) as a cofactor. K(+) is required as a cofactor.

Its subcellular location is the cytoplasm. It catalyses the reaction pyruvate + ATP = phosphoenolpyruvate + ADP + H(+). It functions in the pathway carbohydrate degradation; glycolysis; pyruvate from D-glyceraldehyde 3-phosphate: step 5/5. This chain is Pyruvate kinase, cytosolic isozyme, found in Nicotiana tabacum (Common tobacco).